A 22-amino-acid chain; its full sequence is Hemoglobinase-like protein 2 (22 aa).

Belongs to the peptidase C13 family.

The catalysed reaction is Hydrolysis of proteins and small molecule substrates at -Asn-|-Xaa- bonds.. The polypeptide is Hemoglobinase-like protein 2 (Fasciola hepatica (Liver fluke)).